We begin with the raw amino-acid sequence, 227 residues long: Cytidylate kinase (227 aa).

Position 12–20 (12–20 (GPSGAGKGT)) interacts with ATP.

This sequence belongs to the cytidylate kinase family. Type 1 subfamily.

It is found in the cytoplasm. The enzyme catalyses CMP + ATP = CDP + ADP. The catalysed reaction is dCMP + ATP = dCDP + ADP. This is Cytidylate kinase from Salmonella choleraesuis (strain SC-B67).